Reading from the N-terminus, the 149-residue chain is Small ribosomal subunit protein uS15 (149 aa).

Residues 1-14 are compositionally biased toward basic residues; sequence MGRMHTHRHGKSHS. The disordered stretch occupies residues 1–20; sequence MGRMHTHRHGKSHSIRPATL.

It belongs to the universal ribosomal protein uS15 family. As to quaternary structure, part of the 30S ribosomal subunit.

The chain is Small ribosomal subunit protein uS15 from Nitrosopumilus maritimus (strain SCM1).